The sequence spans 126 residues: Small ribosomal subunit protein uS11 (126 aa).

Belongs to the universal ribosomal protein uS11 family. As to quaternary structure, part of the 30S ribosomal subunit.

In terms of biological role, located on the platform of the 30S subunit. The chain is Small ribosomal subunit protein uS11 from Methanosarcina barkeri (strain Fusaro / DSM 804).